The following is a 158-amino-acid chain: S-ribosylhomocysteine lyase (158 aa).

His54, His58, and Cys125 together coordinate Fe cation.

It belongs to the LuxS family. Homodimer. It depends on Fe cation as a cofactor.

It catalyses the reaction S-(5-deoxy-D-ribos-5-yl)-L-homocysteine = (S)-4,5-dihydroxypentane-2,3-dione + L-homocysteine. In terms of biological role, involved in the synthesis of autoinducer 2 (AI-2) which is secreted by bacteria and is used to communicate both the cell density and the metabolic potential of the environment. The regulation of gene expression in response to changes in cell density is called quorum sensing. Catalyzes the transformation of S-ribosylhomocysteine (RHC) to homocysteine (HC) and 4,5-dihydroxy-2,3-pentadione (DPD). The polypeptide is S-ribosylhomocysteine lyase (Lactococcus lactis subsp. cremoris (strain MG1363)).